A 153-amino-acid chain; its full sequence is ORM1-like protein 2 (153 aa).

Residues 1–21 (MNVGVAHSEVNPNTRVMNSRG) lie on the Cytoplasmic side of the membrane. The next 2 membrane-spanning stretches (helical) occupy residues 22-42 (IWLAYIILVGLLHVVLLSIPF) and 43-63 (FSIPVVWTLTNVIHNLVMYVF). The Cytoplasmic segment spans residues 64–105 (LHTVKGTPFETPDQGKARLLTHWEQMDYGLQFTSSRKFLSIS). A helical membrane pass occupies residues 106–126 (PIVLYLLASFYTKYDAAHFLI). At 127-153 (NTASLLSVLLPKLPQFHGVRLFGINKY) the chain is on the extracellular side.

The protein belongs to the ORM family. As to quaternary structure, ceramide-sensitive subunit of the serine palmitoyltransferase (SPT) complex, which is also composed of SPTLC1, SPTLC2/3 and SPTSSA/B.

The protein localises to the endoplasmic reticulum membrane. Functionally, plays an essential role in the homeostatic regulation of sphingolipid de novo biosynthesis by modulating the activity of the serine palmitoyltransferase (SPT) in response to ceramide levels. When complexed to SPT, the binding of ceramides to its N-terminus stabilizes a conformation that block SPT substrate entry, hence preventing SPT catalytic activity. Through this mechanism, maintains ceramide levels at sufficient concentrations for the production of complex sphingolipids, but which prevents the accumulation of ceramides to levels that trigger apoptosis. In Bos taurus (Bovine), this protein is ORM1-like protein 2 (ORMDL2).